Here is a 646-residue protein sequence, read N- to C-terminus: Autophagy-related protein 28 (646 aa).

2 disordered regions span residues 1-148 (MSSP…HVDN) and 221-245 (PTRS…RGLK). The segment covering 12–21 (SPRQRLSNPL) has biased composition (polar residues). Residues 63–75 (SATSTRRSSSPAS) show a composition bias toward low complexity. Positions 106 to 122 (MMMNQHPSRQSTVSSHG) are enriched in polar residues. 2 coiled-coil regions span residues 283–350 (LDKM…MEDV) and 485–514 (QQAA…ESKH). 2 disordered regions span residues 475-494 (SQAG…SQLS) and 546-612 (AAAV…RGSA). 2 stretches are compositionally biased toward basic and acidic residues: residues 557–575 (STDK…SHDE) and 588–597 (RMEDHDHDPP).

This sequence belongs to the ATG28 family.

The protein localises to the cytoplasm. It localises to the vacuole membrane. Its subcellular location is the cytoplasmic vesicle membrane. Functionally, required for the autophagic degradation of peroxisomes called pexophagy, but not essential for general autophagy. Involved in resistance to elevated pH. In Gibberella zeae (strain ATCC MYA-4620 / CBS 123657 / FGSC 9075 / NRRL 31084 / PH-1) (Wheat head blight fungus), this protein is Autophagy-related protein 28.